Reading from the N-terminus, the 520-residue chain is Phosphoenolpyruvate carboxykinase (ATP) (520 aa).

Positions 61, 196, and 202 each coordinate substrate. ATP is bound by residues Lys202, His222, and 238–246 (GLSGTGKTT). Residues Lys202 and His222 each coordinate Mn(2+). Asp259 is a Mn(2+) binding site. ATP-binding positions include Glu287, Arg324, 443-444 (RI), and Thr449. Arg324 contacts substrate.

This sequence belongs to the phosphoenolpyruvate carboxykinase (ATP) family. The cofactor is Mn(2+).

The protein localises to the cytoplasm. The catalysed reaction is oxaloacetate + ATP = phosphoenolpyruvate + ADP + CO2. It functions in the pathway carbohydrate biosynthesis; gluconeogenesis. Functionally, involved in the gluconeogenesis. Catalyzes the conversion of oxaloacetate (OAA) to phosphoenolpyruvate (PEP) through direct phosphoryl transfer between the nucleoside triphosphate and OAA. The polypeptide is Phosphoenolpyruvate carboxykinase (ATP) (Amoebophilus asiaticus (strain 5a2)).